The primary structure comprises 150 residues: Mating pheromone 1 (150 aa).

A signal peptide spans 1-16 (MKAIFIILAILMVTQA). A propeptide spanning residues 17–52 (FKMTSKVNTKLQSQIQSKFQSKNKLASTFQTSSKLK) is cleaved from the precursor.

It localises to the secreted. Functionally, mating ciliate pheromones (or gamones) are diffusible extracellular communication signals that distinguish different intraspecific classes of cells commonly referred to as 'mating types'. They prepare the latter for conjugation by changing their cell surface properties. This Euplotoides octocarinatus (Freshwater ciliate) protein is Mating pheromone 1.